The following is a 250-amino-acid chain: Golgi SNAP receptor complex member 1 (250 aa).

An N-acetylalanine modification is found at A2. The Cytoplasmic portion of the chain corresponds to 2-229; that stretch reads AAGTSNYWED…QRINLRKRRD (228 aa). Residues 9–30 are a coiled coil; it reads WEDLRKQARQLENELDLKLVSF. A disordered region spans residues 38–59; the sequence is SHSSARDGGRDRYSSDTTPLLN. Over residues 41-51 the composition is skewed to basic and acidic residues; sequence SARDGGRDRYS. The stretch at 68–95 forms a coiled coil; the sequence is ETMAIEIEQLLARLTGVNDKMAEYTNSA. S141 bears the Phosphoserine mark. The helical; Anchor for type IV membrane protein transmembrane segment at 230–250 threads the bilayer; it reads SLILGGVIGICTILLLLYAFH.

The protein belongs to the GOSR1 family. As to quaternary structure, component of several multiprotein Golgi SNARE complexes. Identified in a SNARE complex with BET1, STX5 and YKT6, in a SNARE complex with BET1L, STX5 and YKT6, in a SNARE complex with STX5, GOSR2, SEC22B and BET1, and in complex with STX5 and COG3. Interacts with GABARAPL2.

It is found in the golgi apparatus membrane. Functionally, involved in transport from the ER to the Golgi apparatus as well as in intra-Golgi transport. It belongs to a super-family of proteins called t-SNAREs or soluble NSF (N-ethylmaleimide-sensitive factor) attachment protein receptor. May play a protective role against hydrogen peroxide induced cytotoxicity under glutathione depleted conditions in neuronal cells by regulating the intracellular ROS levels via inhibition of p38 MAPK (MAPK11, MAPK12, MAPK13 and MAPK14). Participates in docking and fusion stage of ER to cis-Golgi transport. Plays an important physiological role in VLDL-transport vesicle-Golgi fusion and thus in VLDL delivery to the hepatic cis-Golgi. This is Golgi SNAP receptor complex member 1 (GOSR1) from Cricetulus griseus (Chinese hamster).